Here is a 327-residue protein sequence, read N- to C-terminus: L-lactate dehydrogenase (327 aa).

NAD(+) is bound by residues valine 18, aspartate 39, arginine 44, tyrosine 69, and 83–84 (GL). Residues glutamine 86, arginine 92, and 124–127 (NPVD) contribute to the substrate site. NAD(+) contacts are provided by residues 122 to 124 (AAN) and serine 147. Residue 152–155 (DSAR) coordinates substrate. Beta-D-fructose 1,6-bisphosphate contacts are provided by arginine 157 and histidine 172. Histidine 179 functions as the Proton acceptor in the catalytic mechanism. Residue tyrosine 224 is modified to Phosphotyrosine. Threonine 233 lines the substrate pocket.

Belongs to the LDH/MDH superfamily. LDH family. As to quaternary structure, homotetramer.

The protein localises to the cytoplasm. The enzyme catalyses (S)-lactate + NAD(+) = pyruvate + NADH + H(+). The protein operates within fermentation; pyruvate fermentation to lactate; (S)-lactate from pyruvate: step 1/1. Allosterically activated by fructose 1,6-bisphosphate (FBP). Its function is as follows. Catalyzes the conversion of lactate to pyruvate. The polypeptide is L-lactate dehydrogenase (Streptococcus suis (strain 98HAH33)).